Consider the following 423-residue polypeptide: CinA-like protein (423 aa).

It belongs to the CinA family.

The polypeptide is CinA-like protein (Prochlorococcus marinus (strain SARG / CCMP1375 / SS120)).